A 289-amino-acid polypeptide reads, in one-letter code: Probable 2-keto-3-deoxyxylonate dehydratase (289 aa).

The Mg(2+) site is built by E144, E146, and D164.

It belongs to the FAH family.

The catalysed reaction is 2-dehydro-3-deoxy-D-arabinonate = 2,5-dioxopentanoate + H2O. The protein operates within carbohydrate metabolism; D-xylose degradation. In terms of biological role, probable 2-keto-3-deoxyxylonate dehydratase involved in the degradation of D-xylose, a major component of hemicelluloses such as xylan. Catalyzes the fourth reaction in the xylose utilization pathway through dehydratation of 2-dehydro-3-deoxy-D-xylonate into alpha-ketoglutarate semialdehyde (2,5-dioxopentanoate). The polypeptide is Probable 2-keto-3-deoxyxylonate dehydratase (Haloferax volcanii (strain ATCC 29605 / DSM 3757 / JCM 8879 / NBRC 14742 / NCIMB 2012 / VKM B-1768 / DS2) (Halobacterium volcanii)).